We begin with the raw amino-acid sequence, 533 residues long: WUSCHEL-related homeobox 7 (533 aa).

Disordered stretches follow at residues 1 to 74 (MASS…NPRP) and 125 to 212 (SKNK…STQA). The span at 28 to 41 (AGSPPSLLSGSSAG) shows a compositional bias: low complexity. Residues 59–68 (GEERVPDPKP) are compositionally biased toward basic and acidic residues. The homeobox; WUS-type DNA-binding region spans 65–129 (DPKPRWNPRP…NRKSRSKNKL (65 aa)). The span at 132-143 (GGTGRAGLGLGG) shows a compositional bias: gly residues. Pro residues predominate over residues 161–174 (FTPPPPILPAPQPV). Residues 175-202 (QPQQQLVSPVAAPTSSSSSSSDRSSGSS) are compositionally biased toward low complexity.

This sequence belongs to the WUS homeobox family.

The protein resides in the nucleus. Its function is as follows. Transcription factor which may be involved in developmental processes. The sequence is that of WUSCHEL-related homeobox 7 (WOX7) from Oryza sativa subsp. japonica (Rice).